The following is a 247-amino-acid chain: ATP synthase subunit a, chloroplastic (247 aa).

The next 5 helical transmembrane spans lie at 38 to 58 (QVLI…IIAV), 95 to 115 (VPFI…GALL), 134 to 154 (INTT…AGLT), 199 to 219 (LVVV…VMFL), and 220 to 240 (GLFT…AYIG).

Belongs to the ATPase A chain family. F-type ATPases have 2 components, CF(1) - the catalytic core - and CF(0) - the membrane proton channel. CF(1) has five subunits: alpha(3), beta(3), gamma(1), delta(1), epsilon(1). CF(0) has four main subunits: a, b, b' and c.

The protein localises to the plastid. Its subcellular location is the chloroplast thylakoid membrane. Its function is as follows. Key component of the proton channel; it plays a direct role in the translocation of protons across the membrane. This is ATP synthase subunit a, chloroplastic from Dioscorea elephantipes (Elephant's foot yam).